Reading from the N-terminus, the 181-residue chain is Diphosphoinositol polyphosphate phosphohydrolase NUDT4B (181 aa).

Substrate contacts are provided by residues Arg-10, 18–20 (KKR), and 39–41 (SSR). Residues 18–145 (KKRAACLCFR…VHAEYLEKLK (128 aa)) form the Nudix hydrolase domain. Positions 50 and 66 each coordinate Mg(2+). The Nudix box motif lies at 51 to 72 (GGMEPEEEPGGAAVREVYEEAG). The Proton acceptor role is filled by Glu-69. Glu-70 provides a ligand contact to Mg(2+). Substrate is bound by residues 90–92 (RKH), Arg-116, and Lys-134.

It belongs to the Nudix hydrolase family. DIPP subfamily. It depends on Mg(2+) as a cofactor. Mn(2+) serves as cofactor.

The protein localises to the cytoplasm. The catalysed reaction is diphospho-myo-inositol polyphosphate + H2O = myo-inositol polyphosphate + phosphate.. Its function is as follows. Cleaves a beta-phosphate from the diphosphate groups in PP-InsP5 (diphosphoinositol pentakisphosphate), PP-InsP4 and [PP]2-InsP4 (bisdiphosphoinositol tetrakisphosphate), suggesting that it may play a role in signal transduction. Also able to catalyze the hydrolysis of dinucleoside oligophosphate Ap6A, but not Ap5A. The major reaction products are ADP and p4a from Ap6A. Also able to hydrolyze 5-phosphoribose 1-diphosphate. Does not play a role in U8 snoRNA decapping activity. Binds U8 snoRNA. The chain is Diphosphoinositol polyphosphate phosphohydrolase NUDT4B from Homo sapiens (Human).